An 836-amino-acid polypeptide reads, in one-letter code: Protein O-mannosyl-transferase TMTC2 (836 aa).

Residues 1-21 (MIAELVSSALGLALYLNTLSA) traverse the membrane as a helical segment. Residues 22–77 (DFCYDDSRAIKTNQDLLPETPWTHIFYNDFWGTLLTHSGSHKSYRPLCTLSFRLNH) are Extracellular-facing. A helical transmembrane segment spans residues 78–98 (AIGGLNPWSYHLVNVLLHAAV). The Cytoplasmic portion of the chain corresponds to 99–107 (TGLFTRFSK). A helical transmembrane segment spans residues 108–128 (ALLGDGYWTFMAGLMFASHPI). Residues 129–132 (HTEA) are Extracellular-facing. The helical transmembrane segment at 133 to 153 (VAGIVGRADVGASLFFLLSLL) threads the bilayer. Over 154–168 (CYIKHCSTRGYSART) the chain is Cytoplasmic. 2 helical membrane passes run 169–184 (WGWF…CSML) and 185–204 (WKEQ…VFVF). At 205 to 220 (HRLKMKQILPTIYKRK) the chain is on the cytoplasmic side. The helical transmembrane segment at 221 to 241 (NLSLFLSISLLTFWGTCLLGA) threads the bilayer. Topologically, residues 242-312 (RLYWMGNKPP…KTVCDWRNLH (71 aa)) are extracellular. A helical membrane pass occupies residues 313–333 (TVAFYSGLLLLAYCGLKNPSL). Topologically, residues 334-392 (EGECNGKALTNGKQNANGHSCHSDVEYRNSEMKPSFASKVENGIKNCVPQRTQLPSTEN) are cytoplasmic. The helical transmembrane segment at 393-415 (IVILSLSLLIIPFIPATNLFFYV) threads the bilayer. Over 416 to 422 (GFVIAER) the chain is Extracellular. Residues 423 to 443 (VLYIPSMGFCLLITVGARALY) traverse the membrane as a helical segment. The Cytoplasmic portion of the chain corresponds to 444–449 (VKVQKR). Residues 450 to 470 (FLKSLVFYATATLIVFYGVKT) traverse the membrane as a helical segment. Residues 471–836 (AIRNGDWQNE…EKQGLKTSKT (366 aa)) are Extracellular-facing. TPR repeat units lie at residues 493-526 (AKAW…RSNM), 527-560 (ADML…RPTL), 561-594 (ASAY…PDEN), 606-639 (TSCL…MPRH), 643-676 (QSLY…KTDH), 677-710 (IPAH…DPTK), 711-744 (GNCY…DNTE), 745-778 (FDVV…RPNY), and 779-812 (PAAL…KPDD).

This sequence belongs to the TMTC family.

Its subcellular location is the membrane. The protein resides in the endoplasmic reticulum. It catalyses the reaction a di-trans,poly-cis-dolichyl beta-D-mannosyl phosphate + L-seryl-[protein] = 3-O-(alpha-D-mannosyl)-L-seryl-[protein] + a di-trans,poly-cis-dolichyl phosphate + H(+). The enzyme catalyses a di-trans,poly-cis-dolichyl beta-D-mannosyl phosphate + L-threonyl-[protein] = 3-O-(alpha-D-mannosyl)-L-threonyl-[protein] + a di-trans,poly-cis-dolichyl phosphate + H(+). The protein operates within protein modification; protein glycosylation. Transfers mannosyl residues to the hydroxyl group of serine or threonine residues. The 4 members of the TMTC family are O-mannosyl-transferases dedicated primarily to the cadherin superfamily, each member seems to have a distinct role in decorating the cadherin domains with O-linked mannose glycans at specific regions. Also acts as O-mannosyl-transferase on other proteins such as PDIA3. The protein is Protein O-mannosyl-transferase TMTC2 of Mus musculus (Mouse).